The chain runs to 509 residues: Maturase K (509 aa).

This sequence belongs to the intron maturase 2 family. MatK subfamily.

Its subcellular location is the plastid. Its function is as follows. Usually encoded in the trnK tRNA gene intron. Probably assists in splicing its own and other chloroplast group II introns. The polypeptide is Maturase K (Cuscuta reflexa (Southern Asian dodder)).